Reading from the N-terminus, the 184-residue chain is Large ribosomal subunit protein uL22 (184 aa).

Positions 160–184 (PEEEVAQKKKISQKKLKKQKLMARE) are disordered. Residues 167-184 (KKKISQKKLKKQKLMARE) are compositionally biased toward basic residues.

Belongs to the universal ribosomal protein uL22 family. Component of the large ribosomal subunit. In terms of tissue distribution, expressed in pancreas, lung, colon, cystic duct, gall bladder, kidney and liver. Expressed at high levels in the well differentiated pancreatic tumor cell lines HPAF, COLO 357 and Capan-1, the moderately differentiated pancreatic tumor cell lines T3M-4, AsPc-1 and BxPc-3, the poorly differentiated pancreatic tumor cell line MIA PaCa-2, and the pancreatic tumor cell lines of undefined differentiation status such as SW979. Expressed at lower levels in the poorly differentiated pancreatic tumor cell lines HCG-25 and PANC-1.

The protein resides in the cytoplasm. Component of the large ribosomal subunit. The ribosome is a large ribonucleoprotein complex responsible for the synthesis of proteins in the cell. This Homo sapiens (Human) protein is Large ribosomal subunit protein uL22 (RPL17).